Reading from the N-terminus, the 909-residue chain is Protein translocase subunit SecA (909 aa).

ATP is bound by residues Gln87, 105-109 (GEGKT), and Asp514. The disordered stretch occupies residues 879–909 (TPVQGGPKVGRNDPCPCGSGKKYKHCHGKLS). The Zn(2+) site is built by Cys893, Cys895, Cys904, and His905. Residues 899–909 (KKYKHCHGKLS) are compositionally biased toward basic residues.

This sequence belongs to the SecA family. Monomer and homodimer. Part of the essential Sec protein translocation apparatus which comprises SecA, SecYEG and auxiliary proteins SecDF-YajC and YidC. Zn(2+) serves as cofactor.

The protein resides in the cell inner membrane. Its subcellular location is the cytoplasm. It carries out the reaction ATP + H2O + cellular proteinSide 1 = ADP + phosphate + cellular proteinSide 2.. Functionally, part of the Sec protein translocase complex. Interacts with the SecYEG preprotein conducting channel. Has a central role in coupling the hydrolysis of ATP to the transfer of proteins into and across the cell membrane, serving both as a receptor for the preprotein-SecB complex and as an ATP-driven molecular motor driving the stepwise translocation of polypeptide chains across the membrane. The protein is Protein translocase subunit SecA of Azoarcus sp. (strain BH72).